Here is a 393-residue protein sequence, read N- to C-terminus: S-adenosylmethionine synthase 2 (393 aa).

Glu9 serves as a coordination point for Mg(2+). His15 provides a ligand contact to ATP. Glu43 is a binding site for K(+). L-methionine contacts are provided by Glu56 and Gln99. Residues 167 to 169, 235 to 238, Asp246, 252 to 253, Ala269, Lys273, and Lys277 contribute to the ATP site; these read DGK, SGRF, and RK. Asp246 is a binding site for L-methionine. An L-methionine-binding site is contributed by Lys277.

The protein belongs to the AdoMet synthase family. In terms of assembly, homotetramer. It depends on Mn(2+) as a cofactor. The cofactor is Mg(2+). Co(2+) is required as a cofactor. K(+) serves as cofactor. In terms of tissue distribution, mostly expressed in flowers, seedpods and roots, and, to a lower extent, in stems and leaves.

Its subcellular location is the cytoplasm. It carries out the reaction L-methionine + ATP + H2O = S-adenosyl-L-methionine + phosphate + diphosphate. Its pathway is amino-acid biosynthesis; S-adenosyl-L-methionine biosynthesis; S-adenosyl-L-methionine from L-methionine: step 1/1. In terms of biological role, catalyzes the formation of S-adenosylmethionine from methionine and ATP. The reaction comprises two steps that are both catalyzed by the same enzyme: formation of S-adenosylmethionine (AdoMet) and triphosphate, and subsequent hydrolysis of the triphosphate. The polypeptide is S-adenosylmethionine synthase 2 (MSAMS2) (Brassica juncea (Indian mustard)).